The sequence spans 312 residues: tRNA-dihydrouridine(16) synthase (312 aa).

Residues 7–9 (PME) and Q68 each bind FMN. Residue C98 is the Proton donor of the active site. FMN is bound by residues K139, 200 to 202 (NGE), and 224 to 225 (GR).

The protein belongs to the Dus family. DusC subfamily. FMN serves as cofactor.

The catalysed reaction is 5,6-dihydrouridine(16) in tRNA + NADP(+) = uridine(16) in tRNA + NADPH + H(+). It carries out the reaction 5,6-dihydrouridine(16) in tRNA + NAD(+) = uridine(16) in tRNA + NADH + H(+). In terms of biological role, catalyzes the synthesis of 5,6-dihydrouridine (D), a modified base found in the D-loop of most tRNAs, via the reduction of the C5-C6 double bond in target uridines. Specifically modifies U16 in tRNAs. This is tRNA-dihydrouridine(16) synthase from Salmonella typhimurium (strain LT2 / SGSC1412 / ATCC 700720).